A 138-amino-acid chain; its full sequence is Basic phospholipase A2 Bs-N6 (138 aa).

An N-terminal signal peptide occupies residues 1–16 (MRTLWIVAVLLVGVEG). Disulfide bonds link Cys-42–Cys-131, Cys-44–Cys-60, Cys-59–Cys-111, Cys-65–Cys-138, Cys-66–Cys-104, Cys-73–Cys-97, and Cys-91–Cys-102. Residues Tyr-43, Gly-45, and Gly-47 each contribute to the Ca(2+) site. His-63 is a catalytic residue. Asp-64 provides a ligand contact to Ca(2+). Residue Asp-105 is part of the active site.

As to quaternary structure, monomer. It depends on Ca(2+) as a cofactor. Post-translationally, contains 7 disulfide bonds. In terms of tissue distribution, expressed by the venom gland.

It localises to the secreted. It catalyses the reaction a 1,2-diacyl-sn-glycero-3-phosphocholine + H2O = a 1-acyl-sn-glycero-3-phosphocholine + a fatty acid + H(+). Functionally, snake venom phospholipase A2 (PLA2) that shows myotoxic activities. PLA2 catalyzes the calcium-dependent hydrolysis of the 2-acyl groups in 3-sn-phosphoglycerides. The protein is Basic phospholipase A2 Bs-N6 of Bothriechis schlegelii (Eyelash palm pitviper).